An 85-amino-acid chain; its full sequence is Large ribosomal subunit protein bL27 (85 aa).

It belongs to the bacterial ribosomal protein bL27 family.

The protein is Large ribosomal subunit protein bL27 of Campylobacter curvus (strain 525.92).